Consider the following 449-residue polypeptide: Keratin, type I cytoskeletal 27 (449 aa).

The interval 1-73 (MSVRFSSASR…VNEHGLLSGN (73 aa)) is head. Residues 74–109 (EKVTMQNLNDRLASYLENVQALEEANADLEQKIKDW) form a coil 1A region. The region spanning 74–389 (EKVTMQNLND…LLIGGDEGSC (316 aa)) is the IF rod domain. Residues 110–131 (YEKFGPGSCRGLDHDYSRYFPI) form a linker 1 region. Residues 132–223 (IDDLRTQIIS…KNHEEEMQAL (92 aa)) are coil 1B. The interval 224 to 246 (QCAAGGNVNVEMNAAPGVDLTVL) is linker 12. The tract at residues 247–385 (LNNMRAEYEA…ETYCLLIGGD (139 aa)) is coil 2. Residues 386–449 (EGSCVKSKGQ…NNKNEQRIPS (64 aa)) are tail. The tract at residues 425-449 (LSSRVHTLEEKSTKVNNKNEQRIPS) is disordered. A compositionally biased stretch (basic and acidic residues) spans 430 to 449 (HTLEEKSTKVNNKNEQRIPS).

This sequence belongs to the intermediate filament family. In terms of assembly, heterotetramer of two type I and two type II keratins. Interacts with KRT6A to form filaments.

Its subcellular location is the cytoplasm. Functionally, essential for the proper assembly of type I and type II keratin protein complexes and formation of keratin intermediate filaments in the inner root sheath (irs). The protein is Keratin, type I cytoskeletal 27 of Rattus norvegicus (Rat).